The following is a 449-amino-acid chain: MFS-type transporter 1 (449 aa).

A compositionally biased stretch (basic and acidic residues) spans 1–37; that stretch reads MTHSSSNEHEKEDDRRASDDMMDRDDQNAKEEQDVSK. The disordered stretch occupies residues 1-43; sequence MTHSSSNEHEKEDDRRASDDMMDRDDQNAKEEQDVSKDAPPVN. Transmembrane regions (helical) follow at residues 61 to 81, 97 to 117, 127 to 147, 152 to 172, 185 to 205, and 212 to 232; these read VAGG…IGIF, TISW…LVVG, YILL…SLST, ILLS…TPAV, LANG…PIMF, and VGFP…LIIA. The N-linked (GlcNAc...) asparagine glycan is linked to N233. A run of 6 helical transmembrane segments spans residues 262–282, 298–318, 326–346, 349–369, 390–410, and 420–440; these read LLTT…INYI, YLIP…GFVA, VHTF…LPAA, APII…VAIL, FGVL…FVAH, and IWTG…RISL.

Belongs to the major facilitator superfamily. Monocarboxylate porter (TC 2.A.1.13) family.

Its subcellular location is the cell membrane. It catalyses the reaction erythrostominone(in) = erythrostominone(out). The catalysed reaction is deoxyerythrostominone(in) = deoxyerythrostominone(out). The enzyme catalyses epierythrostominol(in) = epierythrostominol(out). It carries out the reaction deoxyerythrostominol(in) = deoxyerythrostominol(out). In terms of biological role, MFS-type transporter that mediates the secretion of the 4 major naphthoquinone derivatives produced, erythrostominone (NQ1), deoxyerythrostominone (NQ2), epierythrostominol (NQ4), and deoxyerythrostominol (NQ5), as well as of 3 newly identified naphthoquinone derivatives termed NQ7, NQ8 and NQ9. This is MFS-type transporter 1 from Ophiocordyceps sp. (strain BCC 1869) (Entomopathogenic fungus).